A 172-amino-acid polypeptide reads, in one-letter code: Regulator of hemoglobinization and erythroid cell expansion protein (172 aa).

The chain crosses the membrane as a helical span at residues 9–29 (WHGLVIAVVSLFLQACFLTAI). Positions 52–106 (VPRPSPGHHHPPAVKEMKETQTERDIPMSDSLYRHDSDTPSDSLDSSCSSPPACQ) are disordered. A compositionally biased stretch (basic and acidic residues) spans 64–89 (AVKEMKETQTERDIPMSDSLYRHDSD). Residues 91–103 (PSDSLDSSCSSPP) are compositionally biased toward low complexity. 2 positions are modified to phosphotyrosine: Tyr-132 and Tyr-141.

In terms of assembly, interacts with EPOR; this interaction occurs in a erythropoietin (EPO)-dependent manner. Interacts with JAK2; this interaction occurs in a erythropoietin (EPO)-dependent manner. Interacts (via tyrosine-phosphorylated form) with GRB2. In terms of processing, phosphorylated. Phosphorylation on Tyr-132 and Tyr-141 occurs in a erythropoietin (EPO)-dependent manner. In terms of tissue distribution, expressed in the proerythroblasts (at protein level). Expressed strongly in the kidney. Expressed weakly in the pancreas, liver and lung. Expressed strongly in erythroid progenitor cells (EPCs). Expressed weakly in T-cells and neutrophils.

It is found in the cell membrane. Acts as a signaling transduction factor of the EPO-EPOR signaling pathway promoting erythroid cell differentiation. The sequence is that of Regulator of hemoglobinization and erythroid cell expansion protein from Homo sapiens (Human).